A 209-amino-acid polypeptide reads, in one-letter code: Imidazole glycerol phosphate synthase subunit HisH (209 aa).

The 205-residue stretch at 1–205 (MIAIIDYGMG…KGVVETWKSS (205 aa)) folds into the Glutamine amidotransferase type-1 domain. The Nucleophile role is filled by Cys-79. Active-site residues include His-180 and Glu-182.

As to quaternary structure, heterodimer of HisH and HisF.

It is found in the cytoplasm. It catalyses the reaction 5-[(5-phospho-1-deoxy-D-ribulos-1-ylimino)methylamino]-1-(5-phospho-beta-D-ribosyl)imidazole-4-carboxamide + L-glutamine = D-erythro-1-(imidazol-4-yl)glycerol 3-phosphate + 5-amino-1-(5-phospho-beta-D-ribosyl)imidazole-4-carboxamide + L-glutamate + H(+). The catalysed reaction is L-glutamine + H2O = L-glutamate + NH4(+). It participates in amino-acid biosynthesis; L-histidine biosynthesis; L-histidine from 5-phospho-alpha-D-ribose 1-diphosphate: step 5/9. IGPS catalyzes the conversion of PRFAR and glutamine to IGP, AICAR and glutamate. The HisH subunit catalyzes the hydrolysis of glutamine to glutamate and ammonia as part of the synthesis of IGP and AICAR. The resulting ammonia molecule is channeled to the active site of HisF. This chain is Imidazole glycerol phosphate synthase subunit HisH, found in Bacillus anthracis (strain A0248).